Consider the following 63-residue polypeptide: Acrosin inhibitor 1 (63 aa).

The Kazal-like domain occupies 8–63 (FGFPPDCKVYTEACTREYNPICDSAAKTYSNECTFCNEKMNNDADIHFNHFGECEY). Intrachain disulfides connect Cys14-Cys43, Cys21-Cys40, and Cys29-Cys61.

As to expression, seminal plasma.

The protein localises to the secreted. Functionally, strong inhibitor of acrosin. The sequence is that of Acrosin inhibitor 1 from Bos taurus (Bovine).